The primary structure comprises 131 residues: Sec-independent protein translocase protein TatB (131 aa).

A helical membrane pass occupies residues 2–22 (LGSLSWEHMLVLVVVGLVVLG). The disordered stretch occupies residues 96–131 (AFDRPVNGAAAQPPPAPAPPPEPHRPGQTPFDADAT). Residues 107–116 (QPPPAPAPPP) are compositionally biased toward pro residues.

This sequence belongs to the TatB family. As to quaternary structure, the Tat system comprises two distinct complexes: a TatABC complex, containing multiple copies of TatA, TatB and TatC subunits, and a separate TatA complex, containing only TatA subunits. Substrates initially bind to the TatABC complex, which probably triggers association of the separate TatA complex to form the active translocon.

The protein resides in the cell membrane. Its function is as follows. Part of the twin-arginine translocation (Tat) system that transports large folded proteins containing a characteristic twin-arginine motif in their signal peptide across membranes. Together with TatC, TatB is part of a receptor directly interacting with Tat signal peptides. TatB may form an oligomeric binding site that transiently accommodates folded Tat precursor proteins before their translocation. The chain is Sec-independent protein translocase protein TatB from Mycobacterium avium (strain 104).